The following is a 618-amino-acid chain: Probable protein disulfide-isomerase A4 (618 aa).

The signal sequence occupies residues 1 to 21 (MMFDRRFFALVVLLCVSAVRS). Thioredoxin domains lie at 22 to 139 (TEDA…SRVD), 138 to 254 (VDPN…DQSK), and 480 to 609 (SSGK…KHGV). Disulfide bonds link Cys-65–Cys-68, Cys-176–Cys-179, and Cys-529–Cys-532. Residues 615–618 (KDEL) carry the Prevents secretion from ER motif.

This sequence belongs to the protein disulfide isomerase family.

It localises to the endoplasmic reticulum lumen. The enzyme catalyses Catalyzes the rearrangement of -S-S- bonds in proteins.. The protein is Probable protein disulfide-isomerase A4 of Caenorhabditis elegans.